Consider the following 557-residue polypeptide: Ubiquitin C-terminal hydrolase 22 (557 aa).

The segment at 36–130 (FRCFNDARIK…VSKQLFGLGM (95 aa)) adopts a UBP-type; degenerate zinc-finger fold. 8 residues coordinate Zn(2+): C56, C59, C69, C72, C77, H80, H84, and H91. Residues 177 to 531 (RGLNNLGSTC…ECYMLFYAQE (355 aa)) enclose the USP domain. C186 acts as the Nucleophile in catalysis. The Proton acceptor role is filled by H491.

This sequence belongs to the peptidase C19 family. Component of a deubiquitination module (DUB module) formed by ENY2, SGF11, and UBP22 in Arabidopsis. Interacts directly with SGF11, but not with ENY2.

The protein resides in the nucleus. Its subcellular location is the nucleoplasm. The enzyme catalyses Thiol-dependent hydrolysis of ester, thioester, amide, peptide and isopeptide bonds formed by the C-terminal Gly of ubiquitin (a 76-residue protein attached to proteins as an intracellular targeting signal).. Its function is as follows. Component of a deubiquitination module (DUB module) that specifically deubiquinates monoubiquinated histone H2B (H2Bub). Does not seem to be a component of the TREX-2 complex. Seems to act independently of the SAGA multiprotein complex. The DUB module is responsible for the major H2Bub deubiquitinase activity in Arabidopsis. This is Ubiquitin C-terminal hydrolase 22 from Arabidopsis thaliana (Mouse-ear cress).